A 197-amino-acid chain; its full sequence is Nucleoid occlusion factor SlmA (197 aa).

The HTH tetR-type domain occupies 7–67 (ISRREHILQC…GLIEFIEDSL (61 aa)). The H-T-H motif DNA-binding region spans 30–49 (TTAKLAAEVGVSEAALYRHF).

This sequence belongs to the nucleoid occlusion factor SlmA family. As to quaternary structure, homodimer. Interacts with FtsZ.

It localises to the cytoplasm. The protein resides in the nucleoid. Required for nucleoid occlusion (NO) phenomenon, which prevents Z-ring formation and cell division over the nucleoid. Acts as a DNA-associated cell division inhibitor that binds simultaneously chromosomal DNA and FtsZ, and disrupts the assembly of FtsZ polymers. SlmA-DNA-binding sequences (SBS) are dispersed on non-Ter regions of the chromosome, preventing FtsZ polymerization at these regions. The chain is Nucleoid occlusion factor SlmA from Shewanella amazonensis (strain ATCC BAA-1098 / SB2B).